The sequence spans 542 residues: Major facilitator superfamily domain-containing protein 6-like (542 aa).

Helical transmembrane passes span 46–66 (LGLSAAMIGIIMASKHLLALL), 89–109 (LLSSALVVLPLLLFPSAGILV), 198–218 (MFFLVLLVTALWEFVAVPLEW), 246–266 (VGAAFGSCLVGVLVTNLFCRI), 272–292 (FYSYTVLMILTVPASALLPIY), 321–341 (VTVILTGMVTSAVSDFLLWLM), 352–372 (GICLALAHLSHTGFSPIAGPL), 381–401 (WMLVLAVVGLAMQCLYYSFLW), 404–424 (WAVMPAQLLAGFSTGALWWSV), 444–464 (FEAFSLDMGAALGSLIAGFVV), and 469–489 (VNVLFQGASVMLAVWSSALAV).

The protein belongs to the major facilitator superfamily. MFSD6 family.

Its subcellular location is the membrane. The polypeptide is Major facilitator superfamily domain-containing protein 6-like (mfsd6l) (Danio rerio (Zebrafish)).